The following is an 853-amino-acid chain: Wolframin (853 aa).

The disordered stretch occupies residues 139-179 (KQLERKMRRIYNLQRKRRRRDDDRSSSSSEGEQEPECEPLE). Residues 144–157 (KMRRIYNLQRKRRR) are compositionally biased toward basic residues. Over residues 169 to 179 (GEQEPECEPLE) the composition is skewed to acidic residues. Helical transmembrane passes span 238 to 258 (MIFHPLIFFTLFYHRLLNLIV), 259 to 279 (SIPNVIPLSVRCSVLVAISWW), 285 to 305 (LPLVSYYLSLGIMIWATCKML), 347 to 367 (LYFFCAFICNLIVYPLVTDAW), 373 to 393 (LTIISGALTFITMCVSMYASS), 446 to 466 (FCLNCRTALYLFIPVLLIMMA), 473 to 493 (GVYTFLIPHCVTLSWLQVCIA), 513 to 533 (IVLFLPLFGIVALLVPVFVAI), 545 to 565 (WGSTALACGLVVVLSCILALN), and 572 to 592 (ITMLQLITAITTACLLVLPYM). N-linked (GlcNAc...) asparagine glycans are attached at residues Asn694 and Asn769.

As to expression, detected in adult brain.

It is found in the membrane. Its subcellular location is the endoplasmic reticulum. The protein localises to the mitochondrion. In terms of biological role, participates in the regulation of cellular Ca(2+) homeostasis, at least partly, by modulating the filling state of the endoplasmic reticulum Ca(2+) store. In neurons and glial cells, has a role in maintaining neuronal function and integrity during aging. The polypeptide is Wolframin (Drosophila melanogaster (Fruit fly)).